The following is a 334-amino-acid chain: Probable tRNA pseudouridine synthase B (334 aa).

Aspartate 82 functions as the Nucleophile in the catalytic mechanism. The region spanning 250–325 (LPKVWIRDSA…IAVDVDKVFM (76 aa)) is the PUA domain.

Belongs to the pseudouridine synthase TruB family. Type 2 subfamily.

It catalyses the reaction uridine(55) in tRNA = pseudouridine(55) in tRNA. Could be responsible for synthesis of pseudouridine from uracil-55 in the psi GC loop of transfer RNAs. The polypeptide is Probable tRNA pseudouridine synthase B (Thermococcus gammatolerans (strain DSM 15229 / JCM 11827 / EJ3)).